A 1047-amino-acid polypeptide reads, in one-letter code: Exportin-6 (1047 aa).

Residues 32–98 (IDTILNNYKA…KGLLLDIYLN (67 aa)) enclose the Importin N-terminal domain.

The protein belongs to the exportin family.

The protein localises to the nucleus. It is found in the cytoplasm. Functionally, probably mediates the nuclear export of actin and profilin-actin complexes. In Dictyostelium discoideum (Social amoeba), this protein is Exportin-6 (xpo6).